The chain runs to 234 residues: Glutathione S-transferase U16 (234 aa).

The region spanning 5–85 is the GST N-terminal domain; sequence EEVKLLGVWY…YIDETWNSSA (81 aa). Glutathione contacts are provided by residues 15-16, 42-43, 56-57, and 69-70; these read SP, SK, KV, and ES. The GST C-terminal domain maps to 92–219; that stretch reads HPYDRALARF…APEIEKVAEF (128 aa).

It belongs to the GST superfamily. Tau family.

Its subcellular location is the cytoplasm. The protein resides in the cytosol. The enzyme catalyses RX + glutathione = an S-substituted glutathione + a halide anion + H(+). Its function is as follows. May be involved in the conjugation of reduced glutathione to a wide number of exogenous and endogenous hydrophobic electrophiles and have a detoxification role against certain herbicides. This Arabidopsis thaliana (Mouse-ear cress) protein is Glutathione S-transferase U16 (GSTU16).